The sequence spans 402 residues: MMVALRGASALLVLFLAAFLPPPQCTQDPAMVHYIYQRFRVLEQGLEKCTQATRAYIQEFQEFSKNISVMLGRCQTYTSEYKSAVGNLALRVERAQREIDYIQYLREADECIESEDKTLAEMLLQEAEEEKKIRTLLNASCDNMLMGIKSLKIVKKMMDTHGSWMKDAVYNSPKVYLLIGSRNNTVWEFANIRAFMEDNTKPAPRKQILTLSWQGTGQVIYKGFLFFHNQATSNEIIKYNLQKRTVEDRMLLPGGVGRALVYQHSPSTYIDLAVDEHGLWAIHSGPGTHSHLVLTKIEPGTLGVEHSWDTPCRSQDAEASFLLCGVLYVVYSTGGQGPHRITCIYDPLGTISEEDLPNLFFPKRPRSHSMIHYNPRDKQLYAWNEGNQIIYKLQTKRKLPLK.

Positions 1–28 are cleaved as a signal peptide; the sequence is MMVALRGASALLVLFLAAFLPPPQCTQD. Residue asparagine 66 is glycosylated (N-linked (GlcNAc...) asparagine). Residues 79–133 are a coiled coil; that stretch reads SEYKSAVGNLALRVERAQREIDYIQYLREADECIESEDKTLAEMLLQEAEEEKKI. 2 N-linked (GlcNAc...) asparagine glycosylation sites follow: asparagine 138 and asparagine 183. The 258-residue stretch at 140 to 397 folds into the Olfactomedin-like domain; sequence SCDNMLMGIK…QIIYKLQTKR (258 aa). Cysteines 141 and 324 form a disulfide.

Post-translationally, highly N-glycosylated. In terms of tissue distribution, mainly expressed in the small intestine, liver, lung and heart.

Its subcellular location is the secreted. The chain is Olfactomedin-like protein 1 (OLFML1) from Homo sapiens (Human).